We begin with the raw amino-acid sequence, 391 residues long: uncharacterized protein (391 aa).

The chain crosses the membrane as a helical span at residues 4-24 (FALIVGIVALAIFSFLYIQLY).

The protein resides in the membrane. This is an uncharacterized protein from Haemophilus influenzae (strain ATCC 51907 / DSM 11121 / KW20 / Rd).